We begin with the raw amino-acid sequence, 3907 residues long: Cyclo-acetoacetyl-L-tryptophan synthase (3907 aa).

A Ketosynthase family 3 (KS3) domain is found at 2–436 (KTPIAVVGTA…GTNAHAIIES (435 aa)). Catalysis depends on for beta-ketoacyl synthase activity residues cysteine 176, histidine 313, and histidine 356. The segment at 555-870 (IFTGQGAQWA…SLLRRGQNDL (316 aa)) is malonyl-CoA:ACP transacylase (MAT) domain. The segment at 937 to 1074 (HPLLGRRSAD…ARLTLHLGDA (138 aa)) is N-terminal hotdog fold. Residues 937–1236 (HPLLGRRSAD…GLVMKSVPQP (300 aa)) are dehydratase (DH) domain. The PKS/mFAS DH domain occupies 937-1239 (HPLLGRRSAD…MKSVPQPDTS (303 aa)). The C-terminal hotdog fold stretch occupies residues 1092–1239 (LAPVDVADLY…MKSVPQPDTS (148 aa)). The tract at residues 1386–1573 (AAMFSQLSKD…FSGIDHIFHD (188 aa)) is methyltransferase (MT) domain. A ketoreductase (KR)domain region spans residues 2064-2238 (GTYFMIDMAT…VGSVMALGMV (175 aa)). Positions 2324-2352 (TKEGQYAEQEDSPSLLVPDEQLQESGPGR) are disordered. Residues 2356 to 2430 (DDLLARLSGK…LCEKAVPKPN (75 aa)) form the Carrier 1 domain. O-(pantetheine 4'-phosphoryl)serine is present on serine 2390. Residues 2504-2926 (MSPHQSQIWF…SSNPLISVQS (423 aa)) are condensation. The segment at 2959-3359 (FQDMVDQYGD…GSLILLGRMD (401 aa)) is adenylation. The Carrier 2 domain occupies 3474-3549 (KRLTLGEGEL…QMALKVDARK (76 aa)). At serine 3509 the chain carries O-(pantetheine 4'-phosphoryl)serine. Residues 3594-3813 (LTGSTSFLGR…DFQKVEIIAE (220 aa)) are reductase (RED) domain.

In the C-terminal section; belongs to the NRP synthetase family.

The enzyme catalyses L-tryptophan + malonyl-CoA + acetyl-CoA = cyclo-acetoacetyl-L-tryptophan + CO2 + 2 CoA + H2O. It participates in secondary metabolite biosynthesis. Its function is as follows. Hybrid PKS-NRPS synthetase; part of the gene cluster that mediates the biosynthesis of the fungal neurotoxin cyclopiazonic acid (CPA), a nanomolar inhibitor of Ca(2+)-ATPase with a unique pentacyclic indole tetramic acid scaffold. The hybrid two module polyketide synthase-nonribosomal peptide synthetase (PKS-NRPS) cpaS incorporates acetyl-CoA, malonyl-CoA, and tryptophan (Trp) and utilizes a C-terminal redox-incompetent reductase domain to make and release the tryptophan tetramic acid, cyclo-acetoacetyl-L-tryptophan (c-AATrp), as the first intermediate in the pathway. CpaS catalyzes a Dieckmann-type cyclization on the N-acetoacetyl-Trp intermediate bound in thioester linkage to the phosphopantetheinyl arm of the T domain to form and release c-AATrp. CpaD then regiospecifically dimethylallylates c-AATrp to form beta-cyclopiazonic acid. CpaD discriminates against free Trp but accepts tryptophan-containing thiohydantoins, diketopiperazines, and linear peptides as substrates for C4-prenylation and also acts as regiospecific O-dimethylallyltransferase (DMAT) on a tyrosine-derived tetramic acid. The beta-cyclopiazonate dehydrogenase cpaO then carries out the dehydrogenation of beta-CPA to yield an unstable enimine product, which is captured by intramolecular cyclization to create the pentacyclic fused scaffold of alpha-cyclopiazonate. Finally, the cytochrome P450 monooxygenase cpaH mediates the conversion of CPA into the less toxic 2-oxocyclopiazonic acid, the end product of the CPA pathway in A.oryza. The sequence is that of Cyclo-acetoacetyl-L-tryptophan synthase from Aspergillus oryzae (Yellow koji mold).